The chain runs to 996 residues: MALQERRAAVTSSDILSAHAISSPALAAAAINFAASFHRDARTCCSAHERSQLQKVYRDKILANDKFTANIAAAFLSVLGPNAGRNDAGAERERWGDFDRLAQRGKNMRDRESQHLQHQSGIIAAWGPRCFEYYGWHVLPLPLLRQVHDLAVLIPSWDDAVELLNSRMLLRHELRVLHGNNKALRIGEHSAASKVQDSRSPVERTDIVAALDWARANATSAAARQAVKEAAQGMNGTPINTFGLKRDCYGMVVPSVGPYDPDGDDDNDEDVVDVSPRPAKHIKLSAAEPLRLMFPGSLSHVQACQRHDTDGEKASTAPIRSNKLSQSKQPELDTAAESLRTRHIHNERINEPLDEVSDCSLSLQTIAVGGGSAQEETPDQDVEHAHPEVEITSAISSELRKVDERTDGIRIGRVIMRRSHCMVREQDNQTNEEGTGEVQSQRDRRARDLGKDMETDMDIDSQLEEMLDIHALEAQRNHEEMSDGEDVVAGVAGPGTPTHRAAEEGGCREKEAENAKTDEEQVQDKAALDQAGNTNTNREVENAAPKAHSQEGALRASRTGTIVERTVELHSTHSIHQRASVNTTAPTVARSSDSDDSDSLHSPTALQNLQAYIDTRTHQLTQVLSQLNSTPDVRHHAQLQLDWLSPQRWASVYVEPEHHMGATSSASSDSADIWCLDWDTFHQYADSNHVFRRPVVIKQKFQDSGMYEVDRYVDMLWQRFPEQHIEVQNSITGTSRLMSMAEYCSTALTVTEAGTSLSDNTTSVSNAVNLRCLARADEPLLTRLERFQLLSTLASRVAGTIGRTEHSPPSNLESLLGFDALSFADAFSSSHANLFGGSWVRCLDGLKIYAIAADLDAEDWRRFADEGYKWSPRGKGRLIALEEDDVLFIPPGLRAIHASFTPEPCLMEGGMLWDECAIPEILDELLWIARHQAGTVQPLEFQLSSLIDALEQWLNENNHINQSSPSHTAAEERQTLKASIQSLRDCLSGRSAAFPS.

4 disordered regions span residues 307–333 (HDTDGEKASTAPIRSNKLSQSKQPELD), 425–449 (EQDNQTNEEGTGEVQSQRDRRARDL), 489–556 (AGVA…ALRA), and 571–602 (STHSIHQRASVNTTAPTVARSSDSDDSDSLHS). Composition is skewed to polar residues over residues 318–329 (PIRSNKLSQSKQ) and 428–439 (NQTNEEGTGEVQ). Composition is skewed to basic and acidic residues over residues 440 to 449 (SQRDRRARDL) and 500 to 527 (RAAEEGGCREKEAENAKTDEEQVQDKAA). Over residues 572 to 590 (THSIHQRASVNTTAPTVAR) the composition is skewed to polar residues.

It participates in secondary metabolite biosynthesis. Part of the gene cluster that mediates the biosynthesis of KK-1, a novel cyclic depsipeptide with 10 residues which is a promising active compound with high activity against many plant pathogens, especially Botrytis cinerea. The role of kk1D in KK-1 biosynthesis has still to be determined. The nonribosomal peptide synthetase (NRPS) kk1B catalyzes the elongation and cyclization of the decapeptide chain composed of 1 D-lactic acid residue (D-Lac), 1 pipecolic acid residue (Pip), 1 aspartic acid residue (Asp), 1 isoleucine residue (Ile), 1 glycine residue (Gly), 1 tyrosine residue (Tyr) and 4 valine residues (Val). The Asp, Ile and 3 Val residues are N-methylated by the 5 methyltransferase domains from the NRPS (found in modules 3, 5, 6, 7 and 9), whereas the Tyr residue is O-methylated by the cluster encoded O-methyltransferase kk1A. The thioesterase kk1J is likely to be involved in the corrective mechanism of peptide chain synthesis. The D-lactate dehydrogenase kk1H is involved in the synthesis of D-lactic acid from pyruvic acid, which is recognized by the A domain of the first kk1B module. The pyrroline-5-carboxylate reductase kk1I is involved in the synthesis of the L-pipecolic acid residue of KK-1 from delta-1-pyrroline-5-carboxylate (P5C), a metabolic intermediate of lysine. It is still unclear how kk1C and kk1D are involved in the production of KK-1. This chain is KK-1 biosynthesis cluster protein D, found in Curvularia clavata.